The primary structure comprises 355 residues: uncharacterized protein (355 aa).

Disordered regions lie at residues 1-121 (MPID…MELR), 226-253 (RLMN…KSSM), and 336-355 (NLHR…RKRT). The span at 24–37 (LESESSSESDYEEV) shows a compositional bias: acidic residues. Residues 65-87 (ETKTSSNFQNINPVQTIDNSASE) are compositionally biased toward polar residues. Low complexity predominate over residues 91–105 (DASSAEGGSNSAASS). Positions 106-117 (SEEEDSSDSEYE) are enriched in acidic residues. Residues 226 to 245 (RLMNSEEREAQDLKDAEASR) are compositionally biased toward basic and acidic residues.

This is an uncharacterized protein from Schizosaccharomyces pombe (strain 972 / ATCC 24843) (Fission yeast).